We begin with the raw amino-acid sequence, 1296 residues long: Phosphoribosylformylglycinamidine synthase (1296 aa).

Residues 300–325 form a disordered region; it reads APFSGAATGSGGEIRDEGATGRGSKP. ATP contacts are provided by residues 304–315 and alanine 675; that span reads GAATGSGGEIRD. Mg(2+) is bound by residues glutamate 715, asparagine 719, and aspartate 885. Serine 887 provides a ligand contact to ATP. Residues 1043-1296 form the Glutamine amidotransferase type-1 domain; it reads MAILREQGVN…MFRNARKNVG (254 aa). Catalysis depends on cysteine 1136, which acts as the Nucleophile. The disordered stretch occupies residues 1232 to 1253; it reads TQYPANPNGSPEGITGITSTDG. Residues histidine 1261 and glutamate 1263 contribute to the active site.

This sequence in the N-terminal section; belongs to the FGAMS family. As to quaternary structure, monomer.

The protein resides in the cytoplasm. The catalysed reaction is N(2)-formyl-N(1)-(5-phospho-beta-D-ribosyl)glycinamide + L-glutamine + ATP + H2O = 2-formamido-N(1)-(5-O-phospho-beta-D-ribosyl)acetamidine + L-glutamate + ADP + phosphate + H(+). It participates in purine metabolism; IMP biosynthesis via de novo pathway; 5-amino-1-(5-phospho-D-ribosyl)imidazole from N(2)-formyl-N(1)-(5-phospho-D-ribosyl)glycinamide: step 1/2. Its function is as follows. Phosphoribosylformylglycinamidine synthase involved in the purines biosynthetic pathway. Catalyzes the ATP-dependent conversion of formylglycinamide ribonucleotide (FGAR) and glutamine to yield formylglycinamidine ribonucleotide (FGAM) and glutamate. This chain is Phosphoribosylformylglycinamidine synthase, found in Pseudoalteromonas translucida (strain TAC 125).